The primary structure comprises 563 residues: Delta-1-pyrroline-5-carboxylate dehydrogenase, mitochondrial (563 aa).

The transit peptide at 1–24 (MLLPAPALRRALLSRPWTGAGLRW) directs the protein to the mitochondrion. Lysine 31 carries the N6-succinyllysine modification. Serine 44 bears the Phosphoserine mark. Residue lysine 52 is modified to N6-acetyllysine. N6-acetyllysine; alternate occurs at positions 93, 99, 114, 130, and 175. Lysine 93, lysine 99, lysine 114, lysine 130, and lysine 175 each carry N6-succinyllysine; alternate. NAD(+) contacts are provided by residues serine 208, lysine 233, and 286 to 290 (GSVPT). The active-site Proton acceptor is glutamate 314. At lysine 318 the chain carries N6-acetyllysine. N6-succinyllysine is present on lysine 347. Residue cysteine 348 is the Nucleophile of the active site. Lysine 365 and lysine 376 each carry N6-acetyllysine. At lysine 395 the chain carries N6-succinyllysine. Position 447 (glutamate 447) interacts with NAD(+). Lysine 462 is modified (N6-acetyllysine). The residue at position 509 (lysine 509) is an N6-acetyllysine; alternate. N6-succinyllysine; alternate is present on lysine 509. Residue serine 513 coordinates substrate. N6-acetyllysine occurs at positions 531 and 552.

The protein belongs to the aldehyde dehydrogenase family. Homodimer. Highest expression is found in liver followed by skeletal muscle, kidney, heart, brain, placenta, lung and pancreas.

It localises to the mitochondrion matrix. It carries out the reaction L-glutamate 5-semialdehyde + NAD(+) + H2O = L-glutamate + NADH + 2 H(+). It participates in amino-acid degradation; L-proline degradation into L-glutamate; L-glutamate from L-proline: step 2/2. Functionally, irreversible conversion of delta-1-pyrroline-5-carboxylate (P5C), derived either from proline or ornithine, to glutamate. This is a necessary step in the pathway interconnecting the urea and tricarboxylic acid cycles. The preferred substrate is glutamic gamma-semialdehyde, other substrates include succinic, glutaric and adipic semialdehydes. In Homo sapiens (Human), this protein is Delta-1-pyrroline-5-carboxylate dehydrogenase, mitochondrial (ALDH4A1).